We begin with the raw amino-acid sequence, 21 residues long: Endo-1,4-beta-xylanase A (21 aa).

It belongs to the glycosyl hydrolase 10 (cellulase F) family.

The enzyme catalyses Endohydrolysis of (1-&gt;4)-beta-D-xylosidic linkages in xylans.. The protein operates within glycan degradation; xylan degradation. This Dictyoglomus sp. (strain B4A) protein is Endo-1,4-beta-xylanase A.